The primary structure comprises 330 residues: Malate dehydrogenase (330 aa).

12–18 (GAAGQIG) provides a ligand contact to NAD(+). Residues Arg-93 and Arg-99 each contribute to the substrate site. Residues Asn-106, Gln-113, and 130–132 (VGN) contribute to the NAD(+) site. Residues Asn-132 and Arg-163 each contribute to the substrate site. His-188 serves as the catalytic Proton acceptor.

It belongs to the LDH/MDH superfamily. MDH type 2 family.

The catalysed reaction is (S)-malate + NAD(+) = oxaloacetate + NADH + H(+). Its function is as follows. Catalyzes the reversible oxidation of malate to oxaloacetate. This chain is Malate dehydrogenase, found in Thermobifida fusca (strain YX).